The chain runs to 511 residues: Lysine--tRNA ligase (511 aa).

A disordered region spans residues 1–20 (MQKNTSQPTNTNEQSNQPSL). Mg(2+) contacts are provided by glutamate 422 and glutamate 429.

The protein belongs to the class-II aminoacyl-tRNA synthetase family. In terms of assembly, homodimer. Mg(2+) serves as cofactor.

Its subcellular location is the cytoplasm. It carries out the reaction tRNA(Lys) + L-lysine + ATP = L-lysyl-tRNA(Lys) + AMP + diphosphate. The chain is Lysine--tRNA ligase from Chlorobium chlorochromatii (strain CaD3).